The chain runs to 284 residues: ADP-polyphosphate phosphotransferase 3 (284 aa).

Basic and acidic residues-rich tracts occupy residues 1 to 22 and 260 to 277; these read MDKHTDDRKKNNHWKAEDRKSA and DLGKRQKRPADFEGDTRR. Disordered regions lie at residues 1-32 and 260-284; these read MDKHTDDRKKNNHWKAEDRKSAATEASETRSG and DLGKRQKRPADFEGDTRRRTVPNLF.

It belongs to the polyphosphate kinase 2 (PPK2) family. Class I subfamily.

The catalysed reaction is [phosphate](n) + ATP = [phosphate](n+1) + ADP. It catalyses the reaction [phosphate](n) + GTP = [phosphate](n+1) + GDP. Its function is as follows. Uses inorganic polyphosphate (polyP) as a donor to convert ADP to ATP. Can also convert GDP to GTP, with lower efficiency. This Rhizobium meliloti (strain 1021) (Ensifer meliloti) protein is ADP-polyphosphate phosphotransferase 3.